We begin with the raw amino-acid sequence, 86 residues long: Cell division topological specificity factor (86 aa).

Belongs to the MinE family.

In terms of biological role, prevents the cell division inhibition by proteins MinC and MinD at internal division sites while permitting inhibition at polar sites. This ensures cell division at the proper site by restricting the formation of a division septum at the midpoint of the long axis of the cell. This Shewanella piezotolerans (strain WP3 / JCM 13877) protein is Cell division topological specificity factor.